The sequence spans 101 residues: Movement protein (101 aa).

Residues 30–50 (EVAILSFVALICFYLLYLWVL) form a helical membrane-spanning segment. A disordered region spans residues 75-101 (VDRSNPIPNIPAPPSQGNPGPFVPGTG).

The protein belongs to the mastrevirus movement protein family. Interacts with the capsid protein (CP). Part of a MP-CP-viral DNA complex.

Its subcellular location is the host membrane. Its function is as follows. Involved in the viral transport within, and between cells. The sequence is that of Movement protein from Maize streak virus genotype A (isolate Kenya) (MSV).